The chain runs to 360 residues: Phenylalanine--tRNA ligase alpha subunit (360 aa).

Glu-260 contacts Mg(2+).

The protein belongs to the class-II aminoacyl-tRNA synthetase family. Phe-tRNA synthetase alpha subunit type 1 subfamily. In terms of assembly, tetramer of two alpha and two beta subunits. It depends on Mg(2+) as a cofactor.

Its subcellular location is the cytoplasm. The catalysed reaction is tRNA(Phe) + L-phenylalanine + ATP = L-phenylalanyl-tRNA(Phe) + AMP + diphosphate + H(+). The polypeptide is Phenylalanine--tRNA ligase alpha subunit (Cereibacter sphaeroides (strain ATCC 17029 / ATH 2.4.9) (Rhodobacter sphaeroides)).